We begin with the raw amino-acid sequence, 438 residues long: Transcription termination factor Rho (438 aa).

The region spanning 70 to 145 (YILFTGILEI…LKIEAINYLP (76 aa)) is the Rho RNA-BD domain. Residues 188 to 193 (GKGQRA), 200 to 205 (RTGKTE), and Arg-231 each bind ATP.

This sequence belongs to the Rho family. As to quaternary structure, homohexamer. The homohexamer assembles into an open ring structure.

Functionally, facilitates transcription termination by a mechanism that involves Rho binding to the nascent RNA, activation of Rho's RNA-dependent ATPase activity, and release of the mRNA from the DNA template. This is Transcription termination factor Rho from Helicobacter pylori (strain J99 / ATCC 700824) (Campylobacter pylori J99).